We begin with the raw amino-acid sequence, 364 residues long: Spermidine/putrescine import ATP-binding protein PotA (364 aa).

The ABC transporter domain maps to 6–236; the sequence is IEIRQIYKSY…PANLHVAMFI (231 aa). 38-45 is a binding site for ATP; the sequence is GPSGCGKT.

Belongs to the ABC transporter superfamily. Spermidine/putrescine importer (TC 3.A.1.11.1) family. The complex is composed of two ATP-binding proteins (PotA), two transmembrane proteins (PotB and PotC) and a solute-binding protein (PotD).

Its subcellular location is the cell inner membrane. The enzyme catalyses ATP + H2O + polyamine-[polyamine-binding protein]Side 1 = ADP + phosphate + polyamineSide 2 + [polyamine-binding protein]Side 1.. Functionally, part of the ABC transporter complex PotABCD involved in spermidine/putrescine import. Responsible for energy coupling to the transport system. The polypeptide is Spermidine/putrescine import ATP-binding protein PotA (Legionella pneumophila subsp. pneumophila (strain Philadelphia 1 / ATCC 33152 / DSM 7513)).